The primary structure comprises 823 residues: NAD-dependent histone deacetylase sirtuin-1 (823 aa).

A compositionally biased stretch (low complexity) spans 41–67; that stretch reads LASTSTEAEAEAEATATTTEPATSELA. Residues 41-146 form a disordered region; the sequence is LASTSTEAEA…SSSNCSSSVE (106 aa). The span at 72-95 shows a compositional bias: basic and acidic residues; the sequence is GEIKTKTLAAREEQEIGANLEHKT. Over residues 104-137 the composition is skewed to acidic residues; the sequence is EDEDDEEEEEEDDEEEEEDDEEGITGTSNEDEDS. Residues 204–499 form the Deacetylase sirtuin-type domain; the sequence is KLASVNTFDD…LCCDESVLTE (296 aa). NAD(+)-binding positions include 229 to 248 and 313 to 316; these read GAGV…NGIY and QNID. The active-site Proton acceptor is H331. Zn(2+) is bound by residues C339, C342, C363, and C366. NAD(+)-binding positions include 427-429, 452-454, and S469; these read GSS and NRE. 2 positions are modified to phosphoserine: S618 and S621. Acidic residues predominate over residues 698 to 707; that stretch reads DYSDDDDEEE. Disordered stretches follow at residues 698 to 722 and 777 to 823; these read DYSD…GNVG and IIEQ…LAAV. The span at 798–813 shows a compositional bias: basic and acidic residues; the sequence is PSEENKQQTQIERSEE. Pro residues predominate over residues 814–823; sequence SPPPGQLAAV.

The protein belongs to the sirtuin family. Class I subfamily. As to quaternary structure, interacts with the transcriptional repressors hairy (hry) and deadpan (dpn); via basic domains. Associates with the Esc/E(z) histone methyltransferase complex. Interacts directly with E(z) and HDAC1/Rpd3. The cofactor is Zn(2+).

It localises to the cytoplasm. It is found in the nucleus. Its subcellular location is the chromosome. It catalyses the reaction N(6)-acetyl-L-lysyl-[protein] + NAD(+) + H2O = 2''-O-acetyl-ADP-D-ribose + nicotinamide + L-lysyl-[protein]. Its function is as follows. NAD-dependent histone deacetylase involved in heterochromatic silencing. Mildly suppresses the heterochromatin-mediated silencing phenomenon known as position-effect variegation (PEV). Required for epigenetic silencing of the polycomb group proteins. Has histone H4 deacetylase activity in vitro. Required maternally for establishing proper segmentation of the embryo. Involved in sex determination. May be involved in the regulation of life span. This chain is NAD-dependent histone deacetylase sirtuin-1, found in Drosophila melanogaster (Fruit fly).